The chain runs to 196 residues: Alpha-crystallin A chain (196 aa).

Residue methionine 1 is modified to N-acetylmethionine. The segment at methionine 1–glutamate 63 is required for complex formation with BFSP1 and BFSP2. Glutamine 6 carries the post-translational modification Deamidated glutamine; partial. Serine 45 bears the Phosphoserine mark. Deamidated glutamine; partial is present on glutamine 50. In terms of domain architecture, sHSP spans histidine 76–serine 185. N6-acetyllysine occurs at positions 93 and 122. Residue histidine 123 coordinates Zn(2+). Asparagine 124 is modified (deamidated asparagine; partial). Zn(2+)-binding residues include glutamate 125 and histidine 130. Serine 145 carries the phosphoserine modification. Asparagine 146 carries the deamidated asparagine; partial modification. The tract at residues lysine 168–serine 196 is disordered. Glutamine 170 is modified (deamidated glutamine; partial). Residues glycine 176–proline 190 show a composition bias toward basic and acidic residues. Histidine 177 contributes to the Zn(2+) binding site. The O-linked (GlcNAc) serine glycan is linked to serine 185.

This sequence belongs to the small heat shock protein (HSP20) family. Heteromer composed of three CRYAA and one CRYAB subunits. Inter-subunit bridging via zinc ions enhances stability, which is crucial as there is no protein turn over in the lens. Can also form homodimers and homotetramers (dimers of dimers) which serve as the building blocks of homooligomers. Within homooligomers, the zinc-binding motif is created from residues of 3 different molecules. His-123 and Glu-125 from one molecule are ligands of the zinc ion, and His-130 and His-177 residues from additional molecules complete the site with tetrahedral coordination geometry. Part of a complex required for lens intermediate filament formation composed of BFSP1, BFSP2 and CRYAA. Acetylation at Lys-93 may increase chaperone activity. In terms of processing, undergoes age-dependent proteolytical cleavage at the C-terminus.

It localises to the cytoplasm. Its subcellular location is the nucleus. Its function is as follows. Contributes to the transparency and refractive index of the lens. Acts as a chaperone, preventing aggregation of various proteins under a wide range of stress conditions. Required for the correct formation of lens intermediate filaments as part of a complex composed of BFSP1, BFSP2 and CRYAA. This is Alpha-crystallin A chain (CRYAA) from Mesocricetus auratus (Golden hamster).